Reading from the N-terminus, the 671-residue chain is MIKLNIDGSEIEVSEGSTVYQACTQAGKEIPHFCYHERLKIAGNCRMCLVEMEKSPKPIASCAMPVSNGMVIHTDTPMVKKAREGVMEFLLINHPLDCPICDQGGECDLQDQAFRYGKGTNRFHENKRSIKDKYMGPLIKTAMTRCIQCTRCIRFANDIAGIEEMGAIHRGEHMEVTSYLEQTLDSEMSGNMIDICPVGALNSKPYAFKARKWELKHTASIGVHDAEGSNIRIDSRGDEVMRILPRVNEEINEEWLSDKNRFSYDGLKYQRLDLPYIRKNGKLVEASWSEALKTIADKIKSVKPEKIAAIAGSLVSVEAMFMLKTLLQKLGSNNYSVNQFDYKFDTTQRGNYLFNTTIAGVEKADLCLLIGANLRQIAPVLNSRIGQRVRAGSLKVARIGEGHNQTYRIQDLGSDIKIIEELAIGTHEFTKALKAAKYPMIIVGDGVYARDDGYAILSLIHKIVAEYNIMRDDFQGFNMLHNHASIVGGLDIGFNTPIKLEELELTYLLGADELPFDKLKSAFIIYQGHHGDSGAANADVILPAAAYTEQSGIYVNLEGRPQIAEKAVAPVGVAKEDIEIIKELAGSLKIDIGMDNLQEVRVRLAKEYKIFANIDKIVESKFAKFSFKDKLSKEPITMGPINYYMTDVISKNSVTMAKCVEAKEKRNERAA.

Positions 1-78 (MIKLNIDGSE…GMVIHTDTPM (78 aa)) constitute a 2Fe-2S ferredoxin-type domain. Residues C34, C45, C48, and C62 each contribute to the [2Fe-2S] cluster site. Residues 78–117 (MVKKAREGVMEFLLINHPLDCPICDQGGECDLQDQAFRYG) form the 4Fe-4S His(Cys)3-ligated-type domain. Residues H94, C98, C101, C107, C146, C149, C152, and C196 each contribute to the [4Fe-4S] cluster site. The 4Fe-4S Mo/W bis-MGD-type domain occupies 215-271 (LKHTASIGVHDAEGSNIRIDSRGDEVMRILPRVNEEINEEWLSDKNRFSYDGLKYQR).

This sequence belongs to the complex I 75 kDa subunit family. It depends on [2Fe-2S] cluster as a cofactor. The cofactor is [4Fe-4S] cluster.

It carries out the reaction a quinone + NADH + 5 H(+)(in) = a quinol + NAD(+) + 4 H(+)(out). Its function is as follows. NDH-1 shuttles electrons from NADH, via FMN and iron-sulfur (Fe-S) centers, to quinones in the respiratory chain. Couples the redox reaction to proton translocation (for every two electrons transferred, four hydrogen ions are translocated across the cytoplasmic membrane), and thus conserves the redox energy in a proton gradient. The chain is NADH-quinone oxidoreductase subunit G (nuoG) from Rickettsia felis (strain ATCC VR-1525 / URRWXCal2) (Rickettsia azadi).